We begin with the raw amino-acid sequence, 156 residues long: Adult-specific rigid cuticular protein 15.5 (156 aa).

Positions 23 to 84 (IGNYAFNYGT…SVKTNEPGTA (62 aa)) constitute a Chitin-binding type R&amp;R domain.

Its function is as follows. Component of the rigid cuticle of the spider. This chain is Adult-specific rigid cuticular protein 15.5, found in Araneus diadematus (European garden spider).